We begin with the raw amino-acid sequence, 426 residues long: N-formyl-4-amino-5-aminomethyl-2-methylpyrimidine deformylase (426 aa).

Residues 1 to 31 (MDQQIYSLQKKVEEHKEELIQLAKTLISYQT) are a coiled coil. Histidine 89 contributes to the Zn(2+) binding site. Residue aspartate 91 is part of the active site. Aspartate 122 lines the Zn(2+) pocket. The active-site Proton acceptor is glutamate 156. The Zn(2+) site is built by glutamate 157, aspartate 180, and histidine 394.

Belongs to the peptidase M20A family. The cofactor is Zn(2+). Co(2+) serves as cofactor.

It catalyses the reaction N-formyl-4-amino-5-aminomethyl-2-methylpyrimidine + H2O = 4-amino-5-aminomethyl-2-methylpyrimidine + formate. The protein operates within cofactor biosynthesis; thiamine diphosphate biosynthesis. In terms of biological role, catalyzes the deformylation of the formylaminopyrimidine N-formyl-4-amino-5-aminomethyl-2-methylpyrimidine (FAMP) to give the corresponding aminopyrimidine. This Bacillus subtilis (strain 168) protein is N-formyl-4-amino-5-aminomethyl-2-methylpyrimidine deformylase.